Reading from the N-terminus, the 388-residue chain is Succinate--CoA ligase [ADP-forming] subunit beta (388 aa).

The 236-residue stretch at 9–244 (KQLFARYGLP…PSQEDSREAH (236 aa)) folds into the ATP-grasp domain. ATP contacts are provided by residues Lys-46, 53 to 55 (GRG), Glu-99, Thr-102, and Glu-107. Asn-199 and Asp-213 together coordinate Mg(2+). Residues Asn-264 and 321 to 323 (GIV) contribute to the substrate site.

Belongs to the succinate/malate CoA ligase beta subunit family. In terms of assembly, heterotetramer of two alpha and two beta subunits. Mg(2+) serves as cofactor.

It carries out the reaction succinate + ATP + CoA = succinyl-CoA + ADP + phosphate. It catalyses the reaction GTP + succinate + CoA = succinyl-CoA + GDP + phosphate. It participates in carbohydrate metabolism; tricarboxylic acid cycle; succinate from succinyl-CoA (ligase route): step 1/1. Succinyl-CoA synthetase functions in the citric acid cycle (TCA), coupling the hydrolysis of succinyl-CoA to the synthesis of either ATP or GTP and thus represents the only step of substrate-level phosphorylation in the TCA. The beta subunit provides nucleotide specificity of the enzyme and binds the substrate succinate, while the binding sites for coenzyme A and phosphate are found in the alpha subunit. The sequence is that of Succinate--CoA ligase [ADP-forming] subunit beta from Pectobacterium carotovorum subsp. carotovorum (strain PC1).